A 541-amino-acid polypeptide reads, in one-letter code: Chaperonin GroEL 1 (541 aa).

ATP-binding positions include 29–32, 86–90, Gly413, 479–481, and Asp495; these read TLGP, DGTTT, and NAA.

Belongs to the chaperonin (HSP60) family. In terms of assembly, forms a cylinder of 14 subunits composed of two heptameric rings stacked back-to-back. Interacts with the co-chaperonin GroES.

Its subcellular location is the cytoplasm. It carries out the reaction ATP + H2O + a folded polypeptide = ADP + phosphate + an unfolded polypeptide.. Its function is as follows. Together with its co-chaperonin GroES, plays an essential role in assisting protein folding. The GroEL-GroES system forms a nano-cage that allows encapsulation of the non-native substrate proteins and provides a physical environment optimized to promote and accelerate protein folding. This chain is Chaperonin GroEL 1, found in Synechocystis sp. (strain ATCC 27184 / PCC 6803 / Kazusa).